The chain runs to 426 residues: UPF0761 membrane protein Nmul_A0452 (426 aa).

A run of 6 helical transmembrane segments spans residues 48-68 (LLSL…FPAF), 106-126 (LTAI…LTID), 145-165 (LLIY…SLSL), 187-207 (LLRL…YLIV), 217-237 (AIAG…GFAF), and 255-275 (IPIF…GAVI).

The protein belongs to the UPF0761 family.

It is found in the cell inner membrane. In Nitrosospira multiformis (strain ATCC 25196 / NCIMB 11849 / C 71), this protein is UPF0761 membrane protein Nmul_A0452.